The sequence spans 916 residues: MARYRQPERLTRTISCSDDYVDLKPVNEQPSDKMDPNLGLIASMPKVDQEDRSDLQRRWRNLTKLKPGLSEVNELDNESTPAVLIFGGINTARPTDYLNSASMFLYHLDRNNWNFYGTMLEPRNYHAAAYFHGKVYLFGGYNPLHCIKGKMQATSTTFQLTLDVKQWRRRADMPSARAHHGVTIMDERIFVFGGKDSNGNIIASVEMYEPELDQWTSLASIPEPLMGSAVTNNEGLIYVVGGLTTKKEKNQEGVLSNKIYCFDPLNNKWYRKPPLPCPRAFASATTQNKKIWIWGGASLSEGGTLASTTSVDIWDPKKGRFEQHLIFDSPKHCLAVTKAGTQVFIIGGMSSKENSSLAEVQVYDRKRDILQKCAFLPVSLTGTAAVGIPVNRSPASDITTSKTTRSGSRKTQKTLKDKQQSDIHARNKAARTIQLNYRKYHASKQRRSGIPRDALRKKINVGEGDRVSGRIRTYITGYRPKAPGDDDLSKDFAPVTIPFWPPDPDTSDSVFHTVVDQFHCAKEKMQFKHFYTIPRQIDPNLGMLLFMDEDYQHSKKVLGLRNVESTPYYMSRFHATGDIQDTSIPVIIAIGGVDPQDPMNVSYGRSVFQYHPLKDRWEFFGFMSLPRNHHAAAYYRGAIYVTGGCDPHIRCWGEMVATKMTFVYRLSSNKWTRVADMHSARSHHSMVVFNDSIYVIGGRDDSGRLSASVESYVPALDEWNQEKPMPLPRMGMAVVSHGGYLWVMGGVTSTKGGNINPPVLDDVICYDPVFKHWVSGKPLRIARAFGSAVVCDDKIWLCGGAAPSQDENNYLVSIPAIDVYDNEALEWIQKATLSCPRHSSVVVALESCLYLIGGINSHELSAINRNELYTTDSDTVQSIRELPVQLTGMAAVTIPPTCVTFRSESLSIMIRHKVVT.

Kelch repeat units lie at residues 82 to 133 (AVLI…YFHG), 134 to 187 (KVYL…IMDE), 188 to 235 (RIFV…NNEG), 237 to 289 (IYVV…TQNK), 291 to 341 (IWIW…KAGT), and 342 to 390 (QVFI…GIPV). A disordered region spans residues 393 to 426 (SPASDITTSKTTRSGSRKTQKTLKDKQQSDIHAR). Over residues 414–425 (TLKDKQQSDIHA) the composition is skewed to basic and acidic residues. Kelch repeat units follow at residues 586-637 (VIIA…YYRG), 638-691 (AIYV…VFND), 692-739 (SIYV…SHGG), 741-793 (LWVM…VCDD), 795-847 (IWLC…ALES), and 849-896 (LYLI…TIPP).

As to expression, sperm.

Functionally, may have an enzymatic role. Found the acrosomal vesicle at the anterior of sperm but not in the acrosomal process. This chain is Beta-scruin, found in Limulus polyphemus (Atlantic horseshoe crab).